A 209-amino-acid polypeptide reads, in one-letter code: Uracil phosphoribosyltransferase (209 aa).

Residues Arg-79, Arg-104, and 131–139 contribute to the 5-phospho-alpha-D-ribose 1-diphosphate site; that span reads DPMLATGGS. Uracil-binding positions include Ile-194 and 199–201; that span reads GDA. Asp-200 lines the 5-phospho-alpha-D-ribose 1-diphosphate pocket.

The protein belongs to the UPRTase family. Mg(2+) serves as cofactor.

It carries out the reaction UMP + diphosphate = 5-phospho-alpha-D-ribose 1-diphosphate + uracil. It participates in pyrimidine metabolism; UMP biosynthesis via salvage pathway; UMP from uracil: step 1/1. Its activity is regulated as follows. Allosterically activated by GTP. Its function is as follows. Catalyzes the conversion of uracil and 5-phospho-alpha-D-ribose 1-diphosphate (PRPP) to UMP and diphosphate. The chain is Uracil phosphoribosyltransferase from Streptococcus sanguinis (strain SK36).